The sequence spans 176 residues: Protein CURLY FLAG LEAF 2 (176 aa).

The short motif at 41-46 (FLELSS) is the EAR element. The region spanning 48–82 (FSVPSHLEQCLDLKTGEIYYRSWNSGMRVKEDPRK) is the WW domain. Disordered regions lie at residues 77 to 106 (KEDP…SSEE) and 111 to 130 (YESE…YHKE). Positions 93–106 (SSGESSGTVFSSEE) are enriched in low complexity.

May interact with BHLH122/CFLAP1 and BHLH80/CFLAP2.

May negatively regulate the cuticle development by interacting with the HD-ZIP IV transcription factor HDG1. The protein is Protein CURLY FLAG LEAF 2 of Arabidopsis thaliana (Mouse-ear cress).